The primary structure comprises 556 residues: MNSILAIKNIIIESLSQAMEKARQEGQIPALSVDISIEHPQKTNYGDYATSLPLRLAKATGKRPMELAQILASYIETGSGISKVSVAPPGFINFTFSKEWLCSLVKTILTEAGSYGNINMGGGSRVQIEFVSANPTGPIHIGHGRGAVLGSTLSNILKAAGYYVEEEFYINDAGSQIDAFKRTLFARYQQALGKDAAVPQDGYHGQYMVDLAAEMVTKYGDKYLQMPADIAQNDLGEIGMARMLCLISDDLKALKVDFDIWFSERSLYSGGQYKTAMDILSGNNYIAERDNATWFSSTLLGDSKDNVIVRSDGTPTYFASDIAYHYNKFIERKFDRVINIWGADHQGHVSRMKAMVSALGINPERLTTLLFQMITLKRGGELVRLSKRTGEIISLREVIEEVGADACRFFFLARSTESQMDFDLELAKKESAENPVYYVQYAHARICSILHLAAEKQLDYSTGDTDLLGEEAELELIRKMAELPEIVETVSRTLEPHHLTYYAQELANAFHQFYKDCRVISDNAELTCARLKLVDASRIVLARTLHLMGMTSPESM.

Residues 133–143 carry the 'HIGH' region motif; it reads ANPTGPIHIGH.

This sequence belongs to the class-I aminoacyl-tRNA synthetase family. As to quaternary structure, monomer.

It localises to the cytoplasm. The enzyme catalyses tRNA(Arg) + L-arginine + ATP = L-arginyl-tRNA(Arg) + AMP + diphosphate. This Dehalococcoides mccartyi (strain CBDB1) protein is Arginine--tRNA ligase.